The following is a 398-amino-acid chain: MKVLVLNCGSSSIKYKLFDMDSKEVIAQGGIEKIGLKDSFLKLTLPNGEKKILEKDIPEHTVGVEFILNTLVSPEYGAIQSLEEINAVGHRMVHGGERFSKSVLLTKEVLEAFAACNDLAPLHNPANLKGVDAITAILPNVPQIGVFDTAFHQTMPEHAYLYAIPYELYKKYGVRRYGFHGTSHRYVSQRVCEYLGIKPEGLKLITCHIGNGGSIAAIKDGKCIDTSMGLTPLEGLMMGTRSGDIDAGAVTFIMDKEGLTTTGISNLLNKKSGVAGMMNGSSDMRDLEAAVAKGDPQAILTEQMYFYRIKKYIGAYAAALGGVDVILFTGGVGENQATCRAGVCEGLEFLGVKLDPEKNKVRGEEAIISTDDSRVKVVVIPTDEELLIASDTMAILDK.

Mg(2+) is bound at residue Asn-7. An ATP-binding site is contributed by Lys-14. Residue Arg-91 coordinates substrate. Asp-148 acts as the Proton donor/acceptor in catalysis. ATP contacts are provided by residues 208 to 212 (HIGNG), 283 to 285 (DMR), and 331 to 335 (GVGEN). Residue Glu-384 participates in Mg(2+) binding.

It belongs to the acetokinase family. Homodimer. The cofactor is Mg(2+). Requires Mn(2+) as cofactor.

Its subcellular location is the cytoplasm. The catalysed reaction is acetate + ATP = acetyl phosphate + ADP. The protein operates within metabolic intermediate biosynthesis; acetyl-CoA biosynthesis; acetyl-CoA from acetate: step 1/2. Its function is as follows. Catalyzes the formation of acetyl phosphate from acetate and ATP. Can also catalyze the reverse reaction. In Bacteroides fragilis (strain ATCC 25285 / DSM 2151 / CCUG 4856 / JCM 11019 / LMG 10263 / NCTC 9343 / Onslow / VPI 2553 / EN-2), this protein is Acetate kinase.